Consider the following 203-residue polypeptide: Outer-membrane lipoprotein LolB (203 aa).

Positions 1–16 are cleaved as a signal peptide; it reads MKTFLPCLFFLLILVG. C17 is lipidated: N-palmitoyl cysteine. A lipid anchor (S-diacylglycerol cysteine) is attached at C17.

Belongs to the LolB family. Monomer.

It localises to the cell outer membrane. In terms of biological role, plays a critical role in the incorporation of lipoproteins in the outer membrane after they are released by the LolA protein. This is Outer-membrane lipoprotein LolB from Psychromonas ingrahamii (strain DSM 17664 / CCUG 51855 / 37).